The following is a 63-amino-acid chain: Large ribosomal subunit protein bL28 (63 aa).

Belongs to the bacterial ribosomal protein bL28 family.

This chain is Large ribosomal subunit protein bL28, found in Citrifermentans bemidjiense (strain ATCC BAA-1014 / DSM 16622 / JCM 12645 / Bem) (Geobacter bemidjiensis).